Here is a 2472-residue protein sequence, read N- to C-terminus: Nuclear receptor corepressor 2 (2472 aa).

Disordered regions lie at residues 1–20 (MSGSTQPVAQTWRAAEPRYP), 47–168 (RDYT…SRLS), and 190–220 (ISKLKKKQQQLEEEAAKPPEPEKPVSPPPIE). Arg18 is modified (asymmetric dimethylarginine). Over residues 51–60 (SHLSPGSIIQ) the composition is skewed to polar residues. 2 positions are modified to phosphoserine: Ser54 and Ser67. Basic and acidic residues-rich tracts occupy residues 78–88 (RSQELHLRPES) and 96–112 (GKPDIEFTESKRPRLEL). 2 positions are modified to phosphoserine: Ser149 and Ser152. Residues 165–207 (SRLSKEELIQNMDRVDREITMVEQQISKLKKKQQQLEEEAAKP) are a coiled coil. Residues 203–212 (EAAKPPEPEK) show a composition bias toward basic and acidic residues. A Phosphoserine modification is found at Ser215. The tract at residues 254-312 (LPLYNQPSDTRQYHENIKINQAMRKKLILYFKRRNHARKQWEQRFCQRYDQLMEAWEKK) is interaction with SIN3A/B. Residues 389–480 (MRQLAVIPPM…YLTKKNENYK (92 aa)) are deacetylase activation domain (DAD). The SANT 1 domain maps to 427 to 478 (QVTNMWSEQERDTFREKFMQHPKNFGLIASFLERKTVAECVLYYYLTKKNEN). Positions 449, 470, and 471 each coordinate 1D-myo-inositol 1,4,5,6-tetrakisphosphate. Disordered stretches follow at residues 487–618 (YRRR…EMET), 665–1107 (HKLK…RPPI), and 1173–1197 (SATSGSITKGLPSTRAADGPSYRGS). A coiled-coil region spans residues 492–560 (KSQQQQQQQQ…GEDNDEKEAV (69 aa)). At Ser493 the chain carries Phosphoserine. Residues 494–507 (QQQQQQQQQQQQQQ) are compositionally biased toward low complexity. The segment covering 512–548 (SQEEKEEKEKEKEADKEEEKQDAENEKEELSKEKTDD) has biased composition (basic and acidic residues). Thr549 bears the Phosphothreonine mark. Position 550 is a phosphoserine (Ser550). Polar residues predominate over residues 592-609 (ATPQQSSELASMEMNESS). Residues 606-657 (NESSRWTEEEMETAKKGLLEHGRNWSAIARMVGSKTVSQCKNFYFNYKKRQN) enclose the SANT 2 domain. A coiled-coil region spans residues 658-682 (LDEILQQHKLKMEKERNARRKKKKT). Over residues 709–718 (NEEELAEEAE) the composition is skewed to acidic residues. The span at 739 to 750 (VNNSSDTESVPS) shows a compositional bias: polar residues. 2 positions are modified to phosphoserine: Ser747 and Ser750. Composition is skewed to pro residues over residues 773–782 (TQPPVPPPEE) and 789–811 (EPSPVPDASGPPSPEPSPSPAAP). 2 stretches are compositionally biased toward basic and acidic residues: residues 831–850 (EDAKEQKSEAEEIDVGKPEE) and 859–868 (ESVKSDHKEE). Lys878 carries the N6-acetyllysine modification. Positions 905 to 919 (GSSSGATQDSDSSAT) are enriched in low complexity. Ser938 is modified (phosphoserine). Phosphothreonine is present on Thr945. Ser955 is subject to Phosphoserine. The residue at position 958 (Lys958) is an N6-acetyllysine. Residues 978–988 (KVHEPPREDTV) are compositionally biased toward basic and acidic residues. Residues 989–1000 (PPKPVPPVPPPT) are compositionally biased toward pro residues. The segment covering 1090-1101 (LPLGLHDSARPV) has biased composition (low complexity). N6-acetyllysine is present on residues Lys1181 and Lys1209. Ser1220 is subject to Phosphoserine. Disordered stretches follow at residues 1254-1277 (SVSQCSKEDGRSSSGPPHETAAPK), 1345-1378 (LKREGTPPPPPPPRDLTETYKPRPLDPLGPLKLK), and 1410-1443 (PLAPRPLKEGSITQGTPLKYDSGAPSTGTKKHDV). Thr1350 bears the Phosphothreonine mark. The span at 1359–1368 (DLTETYKPRP) shows a compositional bias: basic and acidic residues. A phosphoserine mark is found at Ser1449, Ser1509, and Ser1565. Positions 1479–1578 (KSRSGTSSGA…TVPEHHPHPI (100 aa)) are disordered. Arg1624 bears the Asymmetric dimethylarginine mark. A disordered region spans residues 1734-1826 (TAPPPFSSRH…PISPRTQDAL (93 aa)). Low complexity predominate over residues 1740 to 1753 (SSRHSSSPLSPGGP). 2 positions are modified to phosphoserine: Ser1746 and Ser1749. Over residues 1765-1778 (SERERERERERDKS) the composition is skewed to basic and acidic residues. Over residues 1807 to 1826 (RPASHTHQHSPISPRTQDAL) the composition is skewed to polar residues. Phosphoserine is present on Ser1819. Omega-N-methylarginine is present on Arg1854. Disordered stretches follow at residues 1857-1878 (RSTSTSSPVRPAATFPPATHCP), 1898-1986 (KETS…KPFS), and 2001-2078 (AGYS…LQTA). Basic and acidic residues predominate over residues 1899-1913 (ETSRVARPERPRVDA). N6-acetyllysine is present on Lys1920. The span at 1925–1938 (EPASSPSKSSEPRS) shows a compositional bias: low complexity. Phosphoserine is present on Ser1963. At Lys1983 the chain carries N6-acetyllysine. A phosphoserine mark is found at Ser2004, Ser2012, Ser2015, Ser2016, and Ser2018. A Phosphothreonine modification is found at Thr2020. Positions 2020-2043 (THDKGLSKPLEELEKSHLEGELRH) are enriched in basic and acidic residues. A Phosphoserine modification is found at Ser2035. Positions 2064 to 2075 (LPESQPSSSPLL) are enriched in low complexity. Residues 2086-2090 (RVVTL) are required for interaction with RARA in the absence of its ligand. The short motif at 2094 to 2098 (ISEVI) is the CORNR box of ID1 element. The disordered stretch occupies residues 2132–2226 (RRPPSDLYLP…GNTSQPPAFF (95 aa)). A phosphoserine mark is found at Ser2161, Ser2181, and Ser2215. Residues 2296 to 2300 (LEAII) carry the CORNR box of ID2 motif. The tract at residues 2343–2459 (GRSDHALTSP…HHAWDEEPKP (117 aa)) is disordered. Ser2371 is modified (phosphoserine). Residues 2439–2450 (LAAGSGPLAGPH) show a composition bias toward low complexity.

This sequence belongs to the N-CoR nuclear receptor corepressors family. In terms of assembly, forms a large corepressor complex that contains SIN3A/B and histone deacetylases HDAC1 and HDAC2. This complex associates with the thyroid (TR) and the retinoid acid receptors (RAR) in the absence of ligand, and may stabilize their interaction with TFIIB. Interacts directly with RARA in the absence of ligand; the interaction represses RARA activity. Interacts (isoform SMRT) with HDAC10. Interacts with MINT. Component of the N-Cor repressor complex, at least composed of NCOR1, NCOR2, HDAC3, TBL1X, TBL1R, CORO2A and GPS2. Interacts with CBFA2T3 and ATXN1L. Interacts with RARB; the interaction is weak and does not repress RARB transactivational activity. Interacts (via 1D-myo-inositol 1,4,5,6-tetrakisphosphate) with HDAC3; promoting the histone deacetylase activity of HDAC3. Interacts with HDAC7 and C1D. Interacts with NR4A2; this interaction increases in the absence of PITX3. Interacts with BCL6 (via the BTB domain), required for BCL6 transcriptional repressor activity on a subset of target genes. Forms ternary complexes with BCOR and BCL6 on target gene promoters but, on enhancer elements, interacts with BCL6 and HDAC3 to repress proximal gene expression. May interact with DEAF1. Interacts with RXRA. Interacts with MECP2. Interacts with ZBTB7A. Interacts with AR. Interacts with TBL1Y. Interacts with SANBR (via the BTB domain). As to expression, ubiquitous. Also widely expressed in early embryos.

It is found in the nucleus. Transcriptional corepressor that mediates the transcriptional repression activity of some nuclear receptors by promoting chromatin condensation, thus preventing access of the basal transcription. Acts by recruiting chromatin modifiers, such as histone deacetylases HDAC1, HDAC2 and HDAC3. Required to activate the histone deacetylase activity of HDAC3. Involved in the regulation BCL6-dependent of the germinal center (GC) reactions, mainly through the control of the GC B-cells proliferation and survival. Recruited by ZBTB7A to the androgen response elements/ARE on target genes, negatively regulates androgen receptor signaling and androgen-induced cell proliferation. This Mus musculus (Mouse) protein is Nuclear receptor corepressor 2 (Ncor2).